Consider the following 277-residue polypeptide: Phycobilisome rod-core linker polypeptide CpcG1 (277 aa).

The 179-residue stretch at 11-189 (RTLDQRVVSY…YWRNKEISLS (179 aa)) folds into the PBS-linker domain.

This sequence belongs to the phycobilisome linker protein family. The phycobilisome is a hemidiscoidal structure that is composed of two distinct substructures: a core complex and a number of rods radiating from the core.

Its subcellular location is the cellular thylakoid membrane. Its function is as follows. Rod-core linker protein required for attachment of phycocyanin to allophycocyanin in cores of phycobilisomes. Linker polypeptides determine the state of aggregation and the location of the disk-shaped phycobiliprotein units within the phycobilisome and modulate their spectroscopic properties in order to mediate a directed and optimal energy transfer. This chain is Phycobilisome rod-core linker polypeptide CpcG1 (cpcG1), found in Thermosynechococcus vestitus (strain NIES-2133 / IAM M-273 / BP-1).